A 485-amino-acid polypeptide reads, in one-letter code: Glutamate--tRNA ligase (485 aa).

The short motif at 10–20 (PSPTGHLHIGN) is the 'HIGH' region element. The 'KMSKS' region motif lies at 253-257 (KLSKR). ATP is bound at residue K256.

This sequence belongs to the class-I aminoacyl-tRNA synthetase family. Glutamate--tRNA ligase type 1 subfamily. As to quaternary structure, monomer.

Its subcellular location is the cytoplasm. It carries out the reaction tRNA(Glu) + L-glutamate + ATP = L-glutamyl-tRNA(Glu) + AMP + diphosphate. Catalyzes the attachment of glutamate to tRNA(Glu) in a two-step reaction: glutamate is first activated by ATP to form Glu-AMP and then transferred to the acceptor end of tRNA(Glu). The polypeptide is Glutamate--tRNA ligase (Enterococcus faecalis (strain ATCC 700802 / V583)).